The sequence spans 162 residues: Succinate dehydrogenase assembly factor 2, mitochondrial (162 aa).

Residues 1-35 (MHNMFPALTKTLSLQGYKIINSQTGSAAWSCGRRW) constitute a mitochondrion transit peptide.

Belongs to the SDHAF2 family. As to quaternary structure, interacts with the flavoprotein subunit within the SDH catalytic dimer.

The protein localises to the mitochondrion matrix. Plays an essential role in the assembly of succinate dehydrogenase (SDH), an enzyme complex (also referred to as respiratory complex II) that is a component of both the tricarboxylic acid (TCA) cycle and the mitochondrial electron transport chain, and which couples the oxidation of succinate to fumarate with the reduction of ubiquinone (coenzyme Q) to ubiquinol. Required for flavinylation (covalent attachment of FAD) of the flavoprotein subunit of the SDH catalytic dimer. The protein is Succinate dehydrogenase assembly factor 2, mitochondrial of Saccharomyces cerevisiae (strain RM11-1a) (Baker's yeast).